We begin with the raw amino-acid sequence, 318 residues long: Ubiquitin-conjugating enzyme E2 J1 (318 aa).

The Cytoplasmic segment spans residues 1–282; that stretch reads METRYNLKSP…QGQPPRAHHT (282 aa). The UBC core domain maps to 10 to 168; that stretch reads PAVKRLMKEA…VLLPLKSGSG (159 aa). Catalysis depends on Cys91, which acts as the Glycyl thioester intermediate. Ser184 bears the Phosphoserine mark. A compositionally biased stretch (polar residues) spans 215–233; it reads PTTFQGATASTSYGAQNPS. The disordered stretch occupies residues 215–283; that stretch reads PTTFQGATAS…GQPPRAHHTE (69 aa). The segment covering 249 to 269 has biased composition (low complexity); that stretch reads SMSPRQRRAQQQSQRRPSTSP. Phosphoserine is present on residues Ser266 and Ser268. A helical; Anchor for type IV membrane protein membrane pass occupies residues 283-303; it reads EHGGSAMLIIILTLALAALIF. Residues 304–318 are Lumenal-facing; it reads RRIYLANEYIFDFEL.

It belongs to the ubiquitin-conjugating enzyme family. Component of the HRD1 complex, which comprises at least SYNV1/HRD1, DERL1/2, FAM8A1, HERPUD1/HERP, OS9, SEL1L and UBE2J1. Interacts with E3 ligase RNF26. Interacts with E3 ligase RNF133. In terms of processing, phosphorylated at Ser-184 in a cytosolic stress-dependent manner by MAP kinase p38 MAPKAPK2. Phosphorylated UBE2J1 is rapidly ubiquitinated and subsequently degraded by the proteasome.

It is found in the endoplasmic reticulum membrane. It carries out the reaction S-ubiquitinyl-[E1 ubiquitin-activating enzyme]-L-cysteine + [E2 ubiquitin-conjugating enzyme]-L-cysteine = [E1 ubiquitin-activating enzyme]-L-cysteine + S-ubiquitinyl-[E2 ubiquitin-conjugating enzyme]-L-cysteine.. Its pathway is protein modification; protein ubiquitination. Catalyzes the covalent attachment of ubiquitin to other proteins. Functions in the selective degradation of misfolded membrane proteins from the endoplasmic reticulum (ERAD) and is essential for cells to recover from ER stress. Plays a role in MAPKAPK2-dependent translational control of TNF-alpha synthesis. Also acts as a platform for perinuclear positioning of the endosomal system by mediating ubiquitination of SQSTM1 through interaction with the E3 ubiquitin-protein ligase RNF26. Plays a role in male fecundity through the interaction with the E3 ubiquitin-protein ligase RNF133. The chain is Ubiquitin-conjugating enzyme E2 J1 (Ube2j1) from Mus musculus (Mouse).